Reading from the N-terminus, the 373-residue chain is Dual-specificity RNA methyltransferase RlmN (373 aa).

E94 serves as the catalytic Proton acceptor. The region spanning 100–339 is the Radical SAM core domain; the sequence is EEDRATLCVS…VIVRKTRGDD (240 aa). C107 and C344 are disulfide-bonded. Residues C114, C118, and C121 each contribute to the [4Fe-4S] cluster site. Residues 168-169, S200, 222-224, and N301 each bind S-adenosyl-L-methionine; these read GE and SIH. C344 (S-methylcysteine intermediate) is an active-site residue.

It belongs to the radical SAM superfamily. RlmN family. [4Fe-4S] cluster is required as a cofactor.

It localises to the cytoplasm. The catalysed reaction is adenosine(2503) in 23S rRNA + 2 reduced [2Fe-2S]-[ferredoxin] + 2 S-adenosyl-L-methionine = 2-methyladenosine(2503) in 23S rRNA + 5'-deoxyadenosine + L-methionine + 2 oxidized [2Fe-2S]-[ferredoxin] + S-adenosyl-L-homocysteine. The enzyme catalyses adenosine(37) in tRNA + 2 reduced [2Fe-2S]-[ferredoxin] + 2 S-adenosyl-L-methionine = 2-methyladenosine(37) in tRNA + 5'-deoxyadenosine + L-methionine + 2 oxidized [2Fe-2S]-[ferredoxin] + S-adenosyl-L-homocysteine. Functionally, specifically methylates position 2 of adenine 2503 in 23S rRNA and position 2 of adenine 37 in tRNAs. m2A2503 modification seems to play a crucial role in the proofreading step occurring at the peptidyl transferase center and thus would serve to optimize ribosomal fidelity. This chain is Dual-specificity RNA methyltransferase RlmN, found in Shewanella sediminis (strain HAW-EB3).